The chain runs to 343 residues: MGEYIMEKNTIILGIETSCDETAVAVVKNGTEIIANVVASQIESHKRFGGVVPEIASRHHVEEITVVLEEALKEANITFDDIDAIAVTEGPGLVGALLIGVNAAKAVAFAHDIPLVGVHHIAGHIYANRLVKEVQFPLLSLVVSGGHTELVYMKEHGSFEVIGETRDDAAGEAYDKVARTLSMPYPGGPHIDRLAHEGKPTIDLPRAWLEPDSYDFSFSGLKSAVINTVHNAKQRGIEIAPEDLAASFQESVIDVLVTKASRAADAYNVKQVLLAGGVAANKGLRARLETEFAQKENVELIIPPLSLCTDNAAMIAAAGTIAYEQGKRATLALNANPGLDIEA.

Fe cation-binding residues include histidine 120 and histidine 124. Substrate contacts are provided by residues 142–146, aspartate 175, glycine 188, aspartate 192, and asparagine 281; that span reads VVSGG. Aspartate 310 is a Fe cation binding site.

This sequence belongs to the KAE1 / TsaD family. The cofactor is Fe(2+).

The protein localises to the cytoplasm. The catalysed reaction is L-threonylcarbamoyladenylate + adenosine(37) in tRNA = N(6)-L-threonylcarbamoyladenosine(37) in tRNA + AMP + H(+). Required for the formation of a threonylcarbamoyl group on adenosine at position 37 (t(6)A37) in tRNAs that read codons beginning with adenine. Is involved in the transfer of the threonylcarbamoyl moiety of threonylcarbamoyl-AMP (TC-AMP) to the N6 group of A37, together with TsaE and TsaB. TsaD likely plays a direct catalytic role in this reaction. The polypeptide is tRNA N6-adenosine threonylcarbamoyltransferase (Bacillus anthracis).